The sequence spans 381 residues: Neuropeptide Y receptor type 2 (381 aa).

A disordered region spans residues 1–35; the sequence is MGPIGTEADENQTVEEMKVEQYGPQTTPRGELVPD. The Extracellular portion of the chain corresponds to 1–51; it reads MGPIGTEADENQTVEEMKVEQYGPQTTPRGELVPDPEPELIDSTKLIEVQV. Asparagine 11 is a glycosylation site (N-linked (GlcNAc...) asparagine). A helical transmembrane segment spans residues 52–72; that stretch reads VLILAYCSIILLGVIGNSLVI. Topologically, residues 73–86 are cytoplasmic; that stretch reads HVVIKFKSMRTVTN. A helical transmembrane segment spans residues 87 to 107; sequence FFIANLAVADLVVNTLCLPFT. Topologically, residues 108-124 are extracellular; the sequence is LTYTLMGEWKMGPVLCH. Residues cysteine 123 and cysteine 203 are joined by a disulfide bond. Residues 125–145 form a helical membrane-spanning segment; sequence LVPYAQGLAVQVSTITLTVIA. Topologically, residues 146–165 are cytoplasmic; it reads LDRHRCIVYHLESKISKRIS. Residues 166 to 186 traverse the membrane as a helical segment; it reads FLIIGLAWGISALLASPLAIF. Residues 187–216 are Extracellular-facing; the sequence is REYSLIEIIPDFEIVACTEKWPGEEKSIYG. A helical membrane pass occupies residues 217 to 237; it reads TVYSLSSLLILYVLPLGIISF. At 238–268 the chain is on the cytoplasmic side; that stretch reads SYTRIWSKLKSHVSPGAANDHYHQRRQKTTK. Residues 269 to 289 traverse the membrane as a helical segment; it reads MLVCVVVVFAVSWLPLHAFQL. Over 290–304 the chain is Extracellular; that stretch reads AVDIDSHVLDLKEYK. A helical transmembrane segment spans residues 305–325; the sequence is LIFTVFHIIAMCSTFANPLLY. The Cytoplasmic portion of the chain corresponds to 326–381; sequence GWMNSNYRKAFLSAFRCEQRLDAIHSEVSVTFKAKKNLEVRKNSGPNDSFTEATNV. Cysteine 342 carries S-palmitoyl cysteine lipidation.

It belongs to the G-protein coupled receptor 1 family.

The protein resides in the cell membrane. Functionally, receptor for neuropeptide Y and peptide YY. The sequence is that of Neuropeptide Y receptor type 2 (NPY2R) from Macaca mulatta (Rhesus macaque).